Consider the following 929-residue polypeptide: MEGDGVPWGSEPVSGPGPGGGGMIRELCRGFGRYRRYLGRLRQNLRETQKFFRDIKCSHNHTCLSSLTGGGGAERGPAGDVAETGLQAGQLSCISFPPKEEKYLQQIVDCLPCILILGQDCNVKCQLLNLLLGVQVLPTTKLGSEESCKLRRLRFTYGTQTRVSLALPGQYELVHTLVAHQGNWETIPEEDLEVQENNEDAAHVLAELEVTMHHALLQEVDVVVAPCQGLRPTVDVLGDLVNDFLPVITYALHKDELSERDEQELQEIRKYFSFPVFFFKVPKLGSEIIDSSTRRMESERSPLYRQLIDLGYLSSSHWNCGAPGQDTKAQSMLVEQSEKLRHLSTFSHQVLQTRLVDAAKALNLVHCHCLDIFINQAFDMQRDLQITPKRLEYTRKKENELYESLMNIANRKQEEMKDMIVETLNTMKEELLDDATNMEFKDVIVPENGEPVGTREIKCCIRQIQELIISRLNQAVANKLISSVDYLRESFVGTLERCLQSLEKSQDVSVHITSNYLKQILNAAYHVEVTFHSGSSVTRMLWEQIKQIIQRITWVSPPAITLEWKRKVAQEAIESLSASKLAKSICSQFRTRLNSSHEAFAASLRQLEAGHSGRLEKTEDLWLRVRKDHAPRLARLSLESCSLQDVLLHRKPKLGQELGRGQYGVVYLCDNWGGHFPCALKSVVPPDEKHWNDLALEFHYMRSLPKHERLVDLHGSVIDYNYGGGSSIAVLLIMERLHRDLYTGLKAGLTLETRLQIALDVVEGIRFLHSQGLVHRDIKLKNVLLDKQNRAKITDLGFCKPEAMMSGSIVGTPIHMAPELFTGKYDNSVDVYAFGILFWYICSGSVKLPEAFERCASKDHLWNNVRRGARPERLPVFDEECWQLMEACWDGDPLKRPLLGIVQPMLQGIMNRLCKSNSEQPNRGLDDST.

The span at 1 to 14 (MEGDGVPWGSEPVS) shows a compositional bias: low complexity. Residues 1–21 (MEGDGVPWGSEPVSGPGPGGG) are disordered. Coiled coils occupy residues 189-215 (EEDL…MHHA) and 395-431 (RKKE…KEEL). Residues 652–906 (PKLGQELGRG…PLLGIVQPML (255 aa)) enclose the Protein kinase domain. Residues 658-666 (LGRGQYGVV) and lysine 681 each bind ATP. Aspartate 777 serves as the catalytic Proton acceptor.

This sequence belongs to the protein kinase superfamily. Ser/Thr protein kinase family. As to expression, predominantly expressed in skeletal muscle and testis. Expressed in basolateral and apical membranes of all tubular epithelia. Expressed in thin ascending limb of the loop of Henle and the distal convoluted tubule. Expressed in all layers of transitional ureteric epithelium and in the ureteric smooth-muscle cells. Weakly expressed in heart, brain, placenta, kidney, pancreas, spleen, thymus, prostate, uterus, small intestine, white blood cells, stomach, spinal cord and adrenal gland. Is widely distributed in the CNS. Also detected in several tumor cell lines. Expressed in the skin.

It is found in the cytoplasm. It localises to the cell membrane. The protein localises to the apical cell membrane. Its subcellular location is the basolateral cell membrane. The protein resides in the cell junction. It carries out the reaction L-seryl-[protein] + ATP = O-phospho-L-seryl-[protein] + ADP + H(+). The enzyme catalyses L-threonyl-[protein] + ATP = O-phospho-L-threonyl-[protein] + ADP + H(+). It catalyses the reaction L-tyrosyl-[protein] + ATP = O-phospho-L-tyrosyl-[protein] + ADP + H(+). Acts as a positive regulator of ERK phosphorylation downstream of fibroblast growth factor-receptor activation. Involved in the regulation of both caspase-dependent apoptosis and caspase-independent cell death. In the skin, it plays a predominant role in suppressing caspase-dependent apoptosis in response to UV stress in a range of dermal cell types. In Homo sapiens (Human), this protein is Dual serine/threonine and tyrosine protein kinase (DSTYK).